Reading from the N-terminus, the 307-residue chain is Ninja-family protein 5 (307 aa).

Disordered stretches follow at residues M1–V159 and T173–P208. Over residues G8–G30 the composition is skewed to gly residues. 2 stretches are compositionally biased toward polar residues: residues Q63–C83 and T173–Q183.

This sequence belongs to the Ninja family.

It is found in the nucleus. This chain is Ninja-family protein 5, found in Zea mays (Maize).